A 333-amino-acid chain; its full sequence is Eukaryotic translation initiation factor 2 subunit 2 (333 aa).

Disordered regions lie at residues 1-87 (MSGD…KSKK), 98-117 (IKDL…EEDL), and 141-165 (EKDE…QTGP). Position 2 is an N-acetylserine (S2). 2 positions are modified to phosphoserine: S2 and S13. The span at 13-22 (SKKKKKKKKP) shows a compositional bias: basic residues. A Phosphothreonine modification is found at T36. A compositionally biased stretch (basic and acidic residues) spans 40 to 51 (ETKEVEPEPTED). S67 carries the phosphoserine modification. K102 is covalently cross-linked (Glycyl lysine isopeptide (Lys-Gly) (interchain with G-Cter in SUMO2)). S105 is modified (phosphoserine). The span at 106–117 (DVQEPAEPEEDL) shows a compositional bias: acidic residues. S158 and S218 each carry phosphoserine. K265 and K293 each carry N6-acetyllysine. The segment at 281-305 (CHTCRSPDTILQKDTRLYFLQCETC) adopts a C4-type zinc-finger fold.

Belongs to the eIF-2-beta/eIF-5 family. In terms of assembly, eukaryotic translation initiation factor 2 eIF2 is a heterotrimeric complex composed of an alpha (EIF2S1), a beta (EIF2S2) and a gamma (EIF2S3) chain. eIF2 is member of the 43S pre-initiation complex (43S PIC). eIF2 forms a complex with at least CELF1/CUGBP1, CALR, CALR3, EIF2S1, EIF2S2, HSP90B1 and HSPA5. Interacts with BZW2/5MP1. Interacts with EIF5.

It is found in the cytoplasm. The protein localises to the cytosol. Its function is as follows. Component of the eIF2 complex that functions in the early steps of protein synthesis by forming a ternary complex with GTP and initiator tRNA. This complex binds to a 40S ribosomal subunit, followed by mRNA binding to form a 43S pre-initiation complex (43S PIC). Junction of the 60S ribosomal subunit to form the 80S initiation complex is preceded by hydrolysis of the GTP bound to eIF2 and release of an eIF2-GDP binary complex. In order for eIF2 to recycle and catalyze another round of initiation, the GDP bound to eIF2 must exchange with GTP by way of a reaction catalyzed by eIF2B. The polypeptide is Eukaryotic translation initiation factor 2 subunit 2 (EIF2S2) (Bos taurus (Bovine)).